The primary structure comprises 81 residues: Protein RALF-like 7 (81 aa).

An N-terminal signal peptide occupies residues 1–29; it reads MSARKKNRIHVFFVSIMIIISLVSGFGEG. Cystine bridges form between Cys-46/Cys-54 and Cys-66/Cys-72.

It belongs to the plant rapid alkalinization factor (RALF) family.

Its subcellular location is the secreted. In terms of biological role, cell signaling peptide that may regulate plant stress, growth, and development. Mediates a rapid alkalinization of extracellular space by mediating a transient increase in the cytoplasmic Ca(2+) concentration leading to a calcium-dependent signaling events through a cell surface receptor and a concomitant activation of some intracellular mitogen-activated protein kinases. The chain is Protein RALF-like 7 (RALFL7) from Arabidopsis thaliana (Mouse-ear cress).